A 291-amino-acid polypeptide reads, in one-letter code: Nucleotide-binding protein EUBREC_0697 (291 aa).

Residue 8 to 15 (GMSGAGKS) coordinates ATP. Position 59 to 62 (59 to 62 (DVRN)) interacts with GTP.

The protein belongs to the RapZ-like family.

Displays ATPase and GTPase activities. The sequence is that of Nucleotide-binding protein EUBREC_0697 from Agathobacter rectalis (strain ATCC 33656 / DSM 3377 / JCM 17463 / KCTC 5835 / VPI 0990) (Eubacterium rectale).